Consider the following 396-residue polypeptide: GDSL esterase/lipase ACHE (396 aa).

An N-terminal signal peptide occupies residues 1-31 (MATAATATAGSRAAVLLLLSLALALALRPSD). Catalysis depends on S49, which acts as the Nucleophile. N108, N126, N151, N196, and N339 each carry an N-linked (GlcNAc...) asparagine glycan. Catalysis depends on residues D359 and H362.

The protein belongs to the 'GDSL' lipolytic enzyme family.

The protein localises to the secreted. Its function is as follows. Esterase that can hydrolyze acetylthiocholine and propionylthiocholine in vitro. Substrate preference is propionylthiocholine &gt; acetylthiocholine. Possesses extremely low activity against butyrylthiocholine. The chain is GDSL esterase/lipase ACHE from Zea mays (Maize).